Reading from the N-terminus, the 444-residue chain is 4-O-dimethylallyl-L-tyrosine synthase (444 aa).

Belongs to the tryptophan dimethylallyltransferase family. As to quaternary structure, homodimer.

The enzyme catalyses L-tyrosine + dimethylallyl diphosphate = 4-O-dimethylallyl-L-tyrosine + diphosphate. In terms of biological role, 4-O-dimethylallyl-L-tyrosine synthase; part of the gene cluster that mediates the biosynthesis of an unusual class of epipolythiodioxopiperazines (ETPs) lacking the reactive thiol group important for toxicity. Firstly, L-tyrosine is prenylated by tcpD, before undergoing condensation with L-glycine in a reaction catalyzed by the NRPS tcpP leading to the diketopiperazine (DKP) backbone. Afterwards the alpha-carbon of tyrosine is oxidized by the cytochrome P450 tcpC to form a hydroxyl group. However, in contrast other ETP biosynthesis pathways studied so far, tcpC is not able to bishydroxylate the DKP at both alpha-carbon positions, but hydroxylates the alpha-carbon of the tyrosine part and the nitrogen of the glycine part. The next steps involve an alpha,beta-elimination reaction catalyzed by tcpI, a methylation by the methyltransferase tcpN the action of the four enzyme cascade tcpG/K/J/I. Due to a dysfunctional cytochrome P450 monooxygenase tcpC, the pathway leads to the biosynthesis of probable non-toxic metabolites lacking the reactive thiol group. The chain is 4-O-dimethylallyl-L-tyrosine synthase from Claviceps purpurea (strain 20.1) (Ergot fungus).